A 116-amino-acid chain; its full sequence is Selenoprotein H (116 aa).

At K20 the chain carries N6-acetyllysine. The cysteinyl-selenocysteine (Cys-Sec); redox-active cross-link spans C35–U38. U38 is a non-standard amino acid (selenocysteine).

The protein belongs to the SelWTH family.

Its function is as follows. May be involved in a redox-related process. The chain is Selenoprotein H from Mus musculus (Mouse).